The primary structure comprises 417 residues: Ribonuclease T2-like (417 aa).

An N-terminal signal peptide occupies residues 1–22 (MSSISGFLGAIPGAQQILQTMA). Cystine bridges form between cysteine 45/cysteine 63, cysteine 52/cysteine 99, cysteine 62/cysteine 165, cysteine 107/cysteine 157, and cysteine 229/cysteine 264. The active site involves histidine 92. The N-linked (GlcNAc...) asparagine glycan is linked to asparagine 115. Residues glutamate 150 and histidine 154 contribute to the active site. The tract at residues 274 to 296 (KTPNKDPGHGHEPTKTRHPHGPT) is disordered. Residues 276–288 (PNKDPGHGHEPTK) show a composition bias toward basic and acidic residues. Asparagine 383 carries N-linked (GlcNAc...) asparagine glycosylation.

The protein belongs to the RNase T2 family.

It is found in the vacuole lumen. The protein resides in the cytoplasm. It carries out the reaction a ribonucleotidyl-ribonucleotide-RNA + H2O = a 3'-end 3'-phospho-ribonucleotide-RNA + a 5'-end dephospho-ribonucleoside-RNA + H(+). In terms of biological role, rnase which modulates cell survival under stress conditions. Released from the vacuole to the cytoplasm during stress to promote tRNA and rRNA cleavage and to activate separately a downstream pathway that promotes cell death. Involved in cell size, vacuolar morphology and growth at high temperatures and high salt concentration. The chain is Ribonuclease T2-like (rny1) from Emericella nidulans (strain FGSC A4 / ATCC 38163 / CBS 112.46 / NRRL 194 / M139) (Aspergillus nidulans).